The sequence spans 170 residues: ATP synthase subunit b (170 aa).

A helical membrane pass occupies residues Gly11 to Leu31.

It belongs to the ATPase B chain family. As to quaternary structure, F-type ATPases have 2 components, F(1) - the catalytic core - and F(0) - the membrane proton channel. F(1) has five subunits: alpha(3), beta(3), gamma(1), delta(1), epsilon(1). F(0) has three main subunits: a(1), b(2) and c(10-14). The alpha and beta chains form an alternating ring which encloses part of the gamma chain. F(1) is attached to F(0) by a central stalk formed by the gamma and epsilon chains, while a peripheral stalk is formed by the delta and b chains.

The protein resides in the cell membrane. Functionally, f(1)F(0) ATP synthase produces ATP from ADP in the presence of a proton or sodium gradient. F-type ATPases consist of two structural domains, F(1) containing the extramembraneous catalytic core and F(0) containing the membrane proton channel, linked together by a central stalk and a peripheral stalk. During catalysis, ATP synthesis in the catalytic domain of F(1) is coupled via a rotary mechanism of the central stalk subunits to proton translocation. Its function is as follows. Component of the F(0) channel, it forms part of the peripheral stalk, linking F(1) to F(0). In Bacillus pumilus (strain SAFR-032), this protein is ATP synthase subunit b.